We begin with the raw amino-acid sequence, 1159 residues long: Caspase recruitment domain-containing protein 11 (1159 aa).

One can recognise a CARD domain in the interval 18 to 110; the sequence is EEEALWDNVE…ELYKLVTGKE (93 aa). Residues 111-128 form a linker region; the sequence is PTRRFSTIVVEEGHEGLT. Positions 176–449 form a coiled coil; that stretch reads FQERYYKMKE…KDNGSLDQSL (274 aa). The segment at 441–496 is disordered; sequence DNGSLDQSLPRHLPATIISQNLGDTSPRTNGQEADDSSTSEESPEDSKYFLPYHPP. Residues serine 448 and serine 466 each carry the phosphoserine modification. Positions 450–671 are inhibitory domain (ID); sequence PRHLPATIIS…GHVRGTGPLV (222 aa). Over residues 457 to 472 the composition is skewed to polar residues; sequence IISQNLGDTSPRTNGQ. Residues 473 to 484 show a composition bias toward acidic residues; sequence EADDSSTSEESP. Serine 512 and serine 540 each carry phosphoserine. Positions 532-578 are disordered; that stretch reads HEEDFTDGSPSSSRSLPVTSSFSKMQPHRSRSSIMSITAEPPGNDSI. Residues 540 to 554 show a composition bias toward low complexity; sequence SPSSSRSLPVTSSFS. At serine 564 the chain carries Phosphoserine; by PKC/PRKCB and PKC/PRKCQ. Serine 598 is subject to Phosphoserine. The tract at residues 610–631 is disordered; sequence NHERYSFGPPSIHSSSSSHQSE. Over residues 620 to 630 the composition is skewed to low complexity; it reads SIHSSSSSHQS. 2 positions are modified to phosphoserine; by PKC/PRKCB and PKC/PRKCQ: serine 649 and serine 657. The PDZ domain maps to 672–760; the sequence is QHTTLNGDGL…LITLHYKVNH (89 aa). 2 positions are modified to phosphoserine: serine 891 and serine 930. The Guanylate kinase-like domain maps to 978 to 1145; it reads RRRPVLFTPT…LLRVLKDKIV (168 aa).

Homodimer; disulfide-linked. Homomultimer; polymerizes following activation, forming a nucleating helical template that seeds BCL10-filament formation via a CARD-CARD interaction. Interacts (via CARD domain) with BCL10 (via CARD domain); interaction takes place following CARD11 activation and polymerization, leading to the formation of a filamentous CBM complex assembly. Component of a CBM complex (CARD11-BCL10-MALT1) complex involved in NF-kappa-B activation. Found in a membrane raft complex, at least composed of BCL10, CARD11, DPP4 and IKBKB. Interacts (via PDZ domain) with DPP4 (via cytoplasmic tail). Post-translationally, phosphorylation at Ser-564, Ser-649 and Ser-657 by PRKCB and PRKCQ leads to a shift from an inactive to an active form that activates the NF-kappa-B signaling.

The protein localises to the cytoplasm. It localises to the membrane raft. Maintained in an autoinhibited state via homodimerization in which the CARD domain forms an extensive interaction with the adjacent linker and coiled-coil regions. Activation downstream of T-cell receptor (TCR) by phosphorylation by PRKCB and PRKCQ triggers CARD11 homooligomerization and BCL10 recruitment, followed by activation of NF-kappa-B. Adapter protein that plays a key role in adaptive immune response by transducing the activation of NF-kappa-B downstream of T-cell receptor (TCR) and B-cell receptor (BCR) engagement. Transduces signals downstream TCR or BCR activation via the formation of a multiprotein complex together with BCL10 and MALT1 that induces NF-kappa-B and MAP kinase p38 (MAPK11, MAPK12, MAPK13 and/or MAPK14) pathways. Upon activation in response to TCR or BCR triggering, CARD11 homooligomerizes to form a nucleating helical template that recruits BCL10 via CARD-CARD interaction, thereby promoting polymerization of BCL10 and subsequent recruitment of MALT1: this leads to I-kappa-B kinase (IKK) phosphorylation and degradation, and release of NF-kappa-B proteins for nuclear translocation. Its binding to DPP4 induces T-cell proliferation and NF-kappa-B activation in a T-cell receptor/CD3-dependent manner. Promotes linear ubiquitination of BCL10 by promoting the targeting of BCL10 to RNF31/HOIP. Stimulates the phosphorylation of BCL10. Also activates the TORC1 signaling pathway. The protein is Caspase recruitment domain-containing protein 11 of Mus musculus (Mouse).